Reading from the N-terminus, the 3660-residue chain is Dystrophin (3660 aa).

An actin-binding region spans residues 1 to 244; sequence MSAHVLWYEE…YVTSLFQVLP (244 aa). Calponin-homology (CH) domains lie at 19 to 123 and 138 to 244; these read DVQK…LHWQ and TNSE…QVLP. Spectrin repeat units lie at residues 341–449, 450–558, 561–669, 721–830, 832–936, 945–1047, 1050–1156, 1159–1265, 1268–1369, 1470–1570, 1573–1678, 1681–1782, 1879–1981, 2013–2103, 2106–2211, 2214–2321, 2472–2574, 2577–2683, 2686–2799, 2802–2904, 2906–2928, and 2931–3037; these read MDLD…NLHK, ILMD…LLQD, RKWQ…QVSQ, EIRK…WLEY, NSII…QLQT, RYKD…KLED, TKLQ…ALKG, DKTV…TLEE, ACWH…SLEQ, EQRL…ELEK, KLSR…LLME, KHME…FIPL, HQWY…TVLE, LSEV…RFDK, EKWR…RIEE, NILS…EIEI, FNKA…QLHE, KDST…ALES, LMLQ…HLEA, DQWK…LRRQ, DDVR…KIDD, and ERLQ…QLHE. In terms of domain architecture, WW spans 3052–3085; sequence TSVQGPWERAISPNKVPYYINHETQTTCWDHPKM. A ZZ-type; degenerate zinc finger spans residues 3305–3361; it reads KHQAKCNICKECPIIGFRYRSLKHFNYDICQSCFFSGRVAKGHKMHYPMVEYCTPTT. Zn(2+)-binding residues include Cys3310, Cys3313, Cys3334, and Cys3337. 2 disordered regions span residues 3503–3526 and 3575–3660; these read KQQH…VSPQ and PQAD…EATM. Polar residues-rich tracts occupy residues 3582-3601 and 3637-3647; these read NGTT…SSQP and QLNNSFPSSRG.

Its subcellular location is the cell membrane. It is found in the sarcolemma. The protein localises to the cytoplasm. The protein resides in the cytoskeleton. It localises to the postsynaptic cell membrane. Its function is as follows. May play a role in anchoring the cytoskeleton to the plasma membrane. This is Dystrophin (DMD) from Gallus gallus (Chicken).